The primary structure comprises 118 residues: U-scoloptoxin(05)-Cw1a (118 aa).

An N-terminal signal peptide occupies residues Met-1–Ala-22.

Belongs to the scoloptoxin-05 family. Post-translationally, contains 5 disulfide bonds. In terms of tissue distribution, expressed by the venom gland.

The protein resides in the secreted. The polypeptide is U-scoloptoxin(05)-Cw1a (Cormocephalus westwoodi (Westwood's green centipede)).